Here is a 280-residue protein sequence, read N- to C-terminus: Small ribosomal subunit protein uS15m (280 aa).

Belongs to the universal ribosomal protein uS15 family. In terms of assembly, component of the mitochondrial ribosome small subunit (28S) which comprises a 12S rRNA and about 30 distinct proteins. As to expression, expressed in anterior and posterior midgut primordia in stage 11 embryos. In stage 13 embryos, expression is high in the developing midgut and hindgut. In stage 16 embryos, expression is elevated in the midgut, hindgut, and in a small region that will give rise to pharyngeal muscles and to the stomatogastric nervous system. In larvae, expression is predominant in the gut, and head, presumably in pharyngeal muscles.

The protein localises to the mitochondrion. Its function is as follows. Essential for gut mitochondrial activity. Might be involved in tissue specific growth factor production. This chain is Small ribosomal subunit protein uS15m (bonsai), found in Drosophila melanogaster (Fruit fly).